Here is a 550-residue protein sequence, read N- to C-terminus: ATP synthase subunit alpha (550 aa).

172 to 179 contacts ATP; sequence GDRKTGKT. The segment at 514 to 550 is disordered; that stretch reads EDEQRVNEPPAKPLAGEENRETVTRFRDGTTDRPAES. Positions 528-550 are enriched in basic and acidic residues; the sequence is AGEENRETVTRFRDGTTDRPAES.

Belongs to the ATPase alpha/beta chains family. In terms of assembly, F-type ATPases have 2 components, CF(1) - the catalytic core - and CF(0) - the membrane proton channel. CF(1) has five subunits: alpha(3), beta(3), gamma(1), delta(1), epsilon(1). CF(0) has three main subunits: a(1), b(2) and c(9-12). The alpha and beta chains form an alternating ring which encloses part of the gamma chain. CF(1) is attached to CF(0) by a central stalk formed by the gamma and epsilon chains, while a peripheral stalk is formed by the delta and b chains.

The protein resides in the cell membrane. It catalyses the reaction ATP + H2O + 4 H(+)(in) = ADP + phosphate + 5 H(+)(out). Functionally, produces ATP from ADP in the presence of a proton gradient across the membrane. The alpha chain is a regulatory subunit. This is ATP synthase subunit alpha from Salinispora arenicola (strain CNS-205).